The sequence spans 701 residues: Putative pentatricopeptide repeat-containing protein At3g25970 (701 aa).

16 PPR repeats span residues 34–64, 65–99, 100–134, 135–165, 166–200, 202–236, 237–267, 269–303, 304–338, 339–371, 372–406, 407–441, 442–472, 474–508, 509–539, and 545–575; these read DIYV…MPKR, DSVS…GSDV, DGYS…GYEC, NVYV…ISEP, NSVS…AAVT, DAGT…GLQH, EITI…LGGS, DLIS…WVET, DIYT…GLEQ, VTSA…LKSK, DLIS…EIKV, DDYA…GFVS, NEFV…ISSK, STVA…NVKL, DHVT…MEPV, and RMEH…MPLN. The interval 580–655 is type E motif; the sequence is VLKTFLGVCR…VPGWSWIEIR (76 aa). Residues 656-686 are type E(+) motif; sequence NQVKAFNAEDRSNPLCQDIYMMIKDLTQEMQ.

The protein belongs to the PPR family. PCMP-E subfamily.

The chain is Putative pentatricopeptide repeat-containing protein At3g25970 (PCMP-E46) from Arabidopsis thaliana (Mouse-ear cress).